The following is a 395-amino-acid chain: Elongation factor Tu (395 aa).

The tr-type G domain maps to Lys10–Glu204. Residues Gly19 to Thr26 are G1. Residue Gly19 to Thr26 participates in GTP binding. Thr26 contributes to the Mg(2+) binding site. Residues Gly60 to Asn64 are G2. The segment at Asp81–Gly84 is G3. GTP is bound by residues Asp81–His85 and Asn136–Asp139. The segment at Asn136–Asp139 is G4. Residues Ser174 to Leu176 form a G5 region.

Belongs to the TRAFAC class translation factor GTPase superfamily. Classic translation factor GTPase family. EF-Tu/EF-1A subfamily. As to quaternary structure, monomer.

Its subcellular location is the cytoplasm. It catalyses the reaction GTP + H2O = GDP + phosphate + H(+). Functionally, GTP hydrolase that promotes the GTP-dependent binding of aminoacyl-tRNA to the A-site of ribosomes during protein biosynthesis. The protein is Elongation factor Tu of Macrococcus caseolyticus (strain JCSC5402) (Macrococcoides caseolyticum).